Reading from the N-terminus, the 185-residue chain is ATP synthase subunit b, chloroplastic (185 aa).

A helical membrane pass occupies residues 7–29 (SFVYLVGHCPFAGSFAFNTDILA).

This sequence belongs to the ATPase B chain family. F-type ATPases have 2 components, F(1) - the catalytic core - and F(0) - the membrane proton channel. F(1) has five subunits: alpha(3), beta(3), gamma(1), delta(1), epsilon(1). F(0) has four main subunits: a(1), b(1), b'(1) and c(10-14). The alpha and beta chains form an alternating ring which encloses part of the gamma chain. F(1) is attached to F(0) by a central stalk formed by the gamma and epsilon chains, while a peripheral stalk is formed by the delta, b and b' chains.

It localises to the plastid. The protein localises to the chloroplast thylakoid membrane. In terms of biological role, f(1)F(0) ATP synthase produces ATP from ADP in the presence of a proton or sodium gradient. F-type ATPases consist of two structural domains, F(1) containing the extramembraneous catalytic core and F(0) containing the membrane proton channel, linked together by a central stalk and a peripheral stalk. During catalysis, ATP synthesis in the catalytic domain of F(1) is coupled via a rotary mechanism of the central stalk subunits to proton translocation. Its function is as follows. Component of the F(0) channel, it forms part of the peripheral stalk, linking F(1) to F(0). This is ATP synthase subunit b, chloroplastic from Dioscorea elephantipes (Elephant's foot yam).